The following is a 256-amino-acid chain: Isoprenyl transferase (256 aa).

Aspartate 33 is a catalytic residue. Aspartate 33 is a Mg(2+) binding site. Substrate is bound by residues 34-37 (GNGR), tryptophan 38, arginine 46, histidine 50, and 78-80 (STE). Residue asparagine 81 is the Proton acceptor of the active site. Substrate contacts are provided by residues tryptophan 82, arginine 84, arginine 201, and 207 to 209 (RIS). Glutamate 220 lines the Mg(2+) pocket.

It belongs to the UPP synthase family. In terms of assembly, homodimer. Mg(2+) is required as a cofactor.

In terms of biological role, catalyzes the condensation of isopentenyl diphosphate (IPP) with allylic pyrophosphates generating different type of terpenoids. The sequence is that of Isoprenyl transferase from Staphylococcus epidermidis (strain ATCC 35984 / DSM 28319 / BCRC 17069 / CCUG 31568 / BM 3577 / RP62A).